A 665-amino-acid chain; its full sequence is DNA ligase (665 aa).

Residues 32–36 (DSEYD), 81–82 (SL), and Glu110 contribute to the NAD(+) site. The active-site N6-AMP-lysine intermediate is Lys112. Residues Arg133, Glu167, Lys283, and Lys307 each coordinate NAD(+). Residues Cys401, Cys404, Cys419, and Cys424 each contribute to the Zn(2+) site. In terms of domain architecture, BRCT spans 586 to 665 (EGHPDFSGKT…AAFIEKQNGI (80 aa)).

It belongs to the NAD-dependent DNA ligase family. LigA subfamily. Mg(2+) serves as cofactor. Requires Mn(2+) as cofactor.

The catalysed reaction is NAD(+) + (deoxyribonucleotide)n-3'-hydroxyl + 5'-phospho-(deoxyribonucleotide)m = (deoxyribonucleotide)n+m + AMP + beta-nicotinamide D-nucleotide.. DNA ligase that catalyzes the formation of phosphodiester linkages between 5'-phosphoryl and 3'-hydroxyl groups in double-stranded DNA using NAD as a coenzyme and as the energy source for the reaction. It is essential for DNA replication and repair of damaged DNA. The protein is DNA ligase of Staphylococcus epidermidis (strain ATCC 12228 / FDA PCI 1200).